The chain runs to 645 residues: Chaperone protein DnaK (645 aa).

At Thr200 the chain carries Phosphothreonine; by autocatalysis. The tract at residues 603–645 (AYSAQKDSGTSTDSTASDTSGNPEERVVDSEYQEIKKDDEDKK) is disordered. Low complexity predominate over residues 609-623 (DSGTSTDSTASDTSG). The segment covering 625–645 (PEERVVDSEYQEIKKDDEDKK) has biased composition (basic and acidic residues).

This sequence belongs to the heat shock protein 70 family.

In terms of biological role, acts as a chaperone. The protein is Chaperone protein DnaK of Anaplasma marginale (strain St. Maries).